Here is a 457-residue protein sequence, read N- to C-terminus: Beta-1,4-mannosyltransferase egh (457 aa).

A run of 6 helical transmembrane segments spans residues 8–28 (LLHC…SGGI), 35–55 (FTLV…LYLL), 57–77 (FLTL…VFYN), 346–366 (LLGI…NIIF), 378–398 (VDFV…FGVI), and 415–435 (VLGA…AVIW).

It belongs to the glycosyltransferase 2 family.

It is found in the membrane. In terms of biological role, glycosyltransferase with a proposed role in glycosphingolipid biosynthesis. Neurogenic protein implicated in epithelial development. Critical component of a differential oocyte-follicle cell adhesive system. This chain is Beta-1,4-mannosyltransferase egh (egh), found in Drosophila melanogaster (Fruit fly).